Consider the following 497-residue polypeptide: Lysine--tRNA ligase (497 aa).

Mg(2+) is bound by residues Glu-406 and Glu-413.

It belongs to the class-II aminoacyl-tRNA synthetase family. Homodimer. Requires Mg(2+) as cofactor.

The protein localises to the cytoplasm. It carries out the reaction tRNA(Lys) + L-lysine + ATP = L-lysyl-tRNA(Lys) + AMP + diphosphate. This is Lysine--tRNA ligase from Rhizobium leguminosarum bv. trifolii (strain WSM2304).